Reading from the N-terminus, the 770-residue chain is MAQWNQLQQLDTRYLEQLHQLYSDSFPMELRQFLAPWIESQDWAYAASKESHATLVFHNLLGEIDQQYSRFLQESNVLYQHNLRRIKQFLQSRYLEKPMEIARIVARCLWEESRLLQTAATAAQQGGQANHPTAAVVTEKQQMLEQHLQDVRKRVQDLEQKMKVVENLQDDFDFNYKTLKSQGDMQDLNGNNQSVTRQKMQQLEQMLTALDQMRRSIVSELAGLLSAMEYVQKTLTDEELADWKRRQQIACIGGPPNICLDRLENWITSLAESQLQTRQQIKKLEELQQKVSYKGDPIVQHRPMLEERIVELFRNLMKSAFVVERQPCMPMHPDRPLVIKTGVQFTTKVRLLVKFPELNYQLKIKVCIDKDSGDVAALRGSRKFNILGTNTKVMNMEESNNGSLSAEFKHLTLREQRCGNGGRANCDASLIVTEELHLITFETEVYHQGLKIDLETHSLPVVVISNICQMPNAWASILWYNMLTNNPKNVNFFTKPPIGTWDQVAEVLSWQFSSTTKRGLSIEQLTTLAEKLLGPGVNYSGCQITWAKFCKENMAGKGFSFWVWLDNIIDLVKKYILALWNEGYIMGFISKERERAILSTKPPGTFLLRFSESSKEGGVTFTWVEKDISGKTQIQSVEPYTKQQLNNMSFAEIIMGYKIMDATNILVSPLVYLYPDIPKEEAFGKYCRPESQEHPEADPGSAAPYLKTKFICVTPTTCSNTIDLPMSPRTLDSLMQFGNNGEGAEPSAGGQFESLTFDMELTSECATSPM.

Ala-2 carries the post-translational modification N-acetylalanine. Residues Lys-49 and Lys-87 each carry the N6-acetyllysine modification. Residues 150–162 carry the Essential for nuclear import motif; that stretch reads DVRKRVQDLEQKM. Residues 580–670 form the SH2 domain; that stretch reads WNEGYIMGFI…DATNILVSPL (91 aa). An allysine; alternate mark is found at Lys-601, Lys-615, and Lys-631. Residues Lys-601, Lys-615, and Lys-631 each carry the N6-acetyllysine; alternate modification. A Phosphotyrosine; by TYK2 modification is found at Tyr-640. Allysine; alternate is present on Lys-685. Lys-685 carries the N6-acetyllysine; alternate modification. Phosphotyrosine is present on Pro-704. A Phosphotyrosine; by FER and PTK6 modification is found at Tyr-705. Lys-707 bears the N6-acetyllysine mark. Residue Thr-714 is modified to Phosphothreonine. Residue Ser-727 is modified to Phosphoserine; by DYRK2, NLK, NEK6, IRAK1, RPS6KA5, ZIPK/DAPK3 and PKC/PRKCE.

The protein belongs to the transcription factor STAT family. In terms of assembly, forms a homodimer or a heterodimer with a related family member (at least STAT1). Component of a promoter-binding complex composed of STAT3, NFATC3 and NFATC4; complex formation is enhanced by calcineurin. Interacts with IL31RA, NCOA1, PELP1, SIPAR, SOCS7, STATIP1 and TMF1. Interacts with IL23R in presence of IL23. Interacts (via SH2 domain) with NLK. Interacts with ARL2BP; the interaction is enhanced by LIF and JAK1 expression. Interacts with KPNA4 and KPNA5; KPNA4 may be the primary mediator of nuclear import. Interacts with CAV2; the interaction is increased on insulin-induced tyrosine phosphorylation of CAV2 and leads to STAT3 activation. Interacts with ARL2BP; interaction is enhanced with ARL2. Interacts with NEK6. Binds to CDK9 when activated and nuclear. Interacts with BMX. Interacts with ZIPK/DAPK3. Interacts with PIAS3; the interaction occurs on stimulation by IL6, CNTF or OSM and inhibits the DNA binding activity of STAT3. In prostate cancer cells, interacts with PRKCE and promotes DNA binding activity of STAT3. Interacts with STMN3, antagonizing its microtubule-destabilizing activity. Interacts with the 'Lys-129' acetylated form of BIRC5/survivin. Interacts with FER. Interacts (via SH2 domain) with EIF2AK2/PKR (via the kinase catalytic domain). Interacts with INPP5F; the interaction is independent of STAT3 Tyr-705 phosphorylation status. Interacts with FGFR4. Interacts with OCIAD1. Interacts with OCIAD2. Interacts (unphosphorylated or phosphorylated at Ser-727) with PHB1. Interacts and may form heterodimers with NHLH1. Found in a complex with SLC39A6, SLC39A10 and with the 'Ser-727' phosphorylated form of STAT3 throughout mitosis. Interacts (when phosphorylated at Tyr-705) with CD274/PD-L1; promoting nuclear translocation of CD274/PD-L1. Interacts (when acetylated) with EP300 (via bromo domain); interaction takes place following STAT3 acetylation by EP300 and promotes enhanceosome assembly. Interacts (when acetylated) with BRD2 (via bromo domain); interaction promotes STAT3 recruitment to chromatin and T-helper Th17 cell differentiation. Interacts with FAM220A/SIPAR; the interaction occurs in both the nucleus and the cytoplasm, is enhanced by IL6 and promotes STAT3 dephosphorylation. Interacts in both unphosphorylated and phosphorylated forms with FAM220A but interacts preferentially in the phosphorylated form in the nucleus. Interacts with PTPN2; the interaction is promoted by FAM220A and leads to STAT3 dephosphorylation which negatively regulates STAT3 transcriptional activator activity. As to quaternary structure, (Microbial infection) Interacts with HCV core protein. (Microbial infection) Interacts with S.typhimurium SarA. In terms of assembly, (Microbial infection) Interacts with human cytomegalovirus (HHV-5) immediate early protein IE1; this interaction leads to STAT3 nuclear accumulation and disruption of IL6-induced STAT3 phosphorylation. Post-translationally, tyrosine phosphorylated upon stimulation with EGF. Tyrosine phosphorylated in response to constitutively activated FGFR1, FGFR2, FGFR3 and FGFR4. Activated through tyrosine phosphorylation by BMX. Tyrosine phosphorylated in response to IL6, IL11, LIF, CNTF, KITLG/SCF, CSF1, EGF, PDGF, IFN-alpha, LEP and OSM. Activated KIT promotes phosphorylation on tyrosine residues and subsequent translocation to the nucleus. Phosphorylated on serine upon DNA damage, probably by ATM or ATR. Serine phosphorylation is important for the formation of stable DNA-binding STAT3 homodimers and maximal transcriptional activity. ARL2BP may participate in keeping the phosphorylated state of STAT3 within the nucleus. Upon LPS challenge, phosphorylated within the nucleus by IRAK1. Upon erythropoietin treatment, phosphorylated on Ser-727 by RPS6KA5. Dephosphorylation on tyrosine residues by PTPN2 negatively regulates IL6/interleukin-6 signaling. Phosphorylation at Tyr-705 by PTK6, isoform M2 of PKM (PKM2) or FER leads to an increase of its transcriptional activity. Phosphorylation at Tyr-705 is increased in the presence of calcineurin. Phosphorylation at Tyr-640 by TYK2 negatively regulates transcriptional activity. In terms of processing, acetylated on lysine residues by EP300/p300, promoting its activation. Acetylation at Lys-49 and Lys-87 by EP300/p300 promotes its activation. Acetylation at Lys-87 by EP300/p300 promotes its association with BRD2 and recruitment to chromatin. Deacetylated at Lys-49 and Lys-87 by HDAC1. Acetylation at Lys-685 by EP300/p300 promotes its homodimerization and activation. Deacetylated at Lys-685 by HDAC3. Acetylated on lysine residues by CREBBP. Deacetylation by LOXL3 leads to disrupt STAT3 dimerization and inhibit STAT3 transcription activity. Oxidation of lysine residues to allysine on STAT3 preferentially takes place on lysine residues that are acetylated. Some lysine residues are oxidized to allysine by LOXL3, leading to disrupt STAT3 dimerization and inhibit STAT3 transcription activity. Oxidation of lysine residues to allysine on STAT3 preferentially takes place on lysine residues that are acetylated. Post-translationally, (Microbial infection) Phosphorylated on Tyr-705 in the presence of S.typhimurium SarA. Heart, brain, placenta, lung, liver, skeletal muscle, kidney and pancreas. Expressed in naive CD4(+) T cells as well as T-helper Th17, Th1 and Th2 cells.

The protein resides in the cytoplasm. The protein localises to the nucleus. Its function is as follows. Signal transducer and transcription activator that mediates cellular responses to interleukins, KITLG/SCF, LEP and other growth factors. Once activated, recruits coactivators, such as NCOA1 or MED1, to the promoter region of the target gene. May mediate cellular responses to activated FGFR1, FGFR2, FGFR3 and FGFR4. Upon activation of IL6ST/gp130 signaling by interleukin-6 (IL6), binds to the IL6-responsive elements identified in the promoters of various acute-phase protein genes. Activated by IL31 through IL31RA. Acts as a regulator of inflammatory response by regulating differentiation of naive CD4(+) T-cells into T-helper Th17 or regulatory T-cells (Treg): acetylation promotes its transcription activity and cell differentiation while deacetylation and oxidation of lysine residues by LOXL3 inhibits differentiation. Involved in cell cycle regulation by inducing the expression of key genes for the progression from G1 to S phase, such as CCND1. Mediates the effects of LEP on melanocortin production, body energy homeostasis and lactation. May play an apoptotic role by transctivating BIRC5 expression under LEP activation. Cytoplasmic STAT3 represses macroautophagy by inhibiting EIF2AK2/PKR activity. Plays a crucial role in basal beta cell functions, such as regulation of insulin secretion. Following JAK/STAT signaling activation and as part of a complex with NFATC3 and NFATC4, binds to the alpha-beta E4 promoter region of CRYAB and activates transcription in cardiomyocytes. In Homo sapiens (Human), this protein is Signal transducer and activator of transcription 3.